The sequence spans 828 residues: DNA topoisomerase 3 (828 aa).

The Toprim domain occupies 4-149 (RILNVAEKPS…KFEFYRAHFS (146 aa)). Residues 167 to 617 (NEKDSIAVDT…STIEKYKQLY (451 aa)) enclose the Topo IA-type catalytic domain. Tyrosine 361 serves as the catalytic O-(5'-phospho-DNA)-tyrosine intermediate. The segment at 763–828 (QQQQQQQQQQ…SDRNNNNFIF (66 aa)) is disordered.

The protein belongs to the type IA topoisomerase family.

The enzyme catalyses ATP-independent breakage of single-stranded DNA, followed by passage and rejoining.. In terms of biological role, releases the supercoiling and torsional tension of DNA introduced during the DNA replication and transcription by transiently cleaving and rejoining one strand of the DNA duplex. Introduces a single-strand break via transesterification at a target site in duplex DNA. The scissile phosphodiester is attacked by the catalytic tyrosine of the enzyme, resulting in the formation of a DNA-(5'-phosphotyrosyl)-enzyme intermediate and the expulsion of a 3'-OH DNA strand. The free DNA strand than undergoes passage around the unbroken strand thus removing DNA supercoils. Finally, in the religation step, the DNA 3'-OH attacks the covalent intermediate to expel the active-site tyrosine and restore the DNA phosphodiester backbone. This chain is DNA topoisomerase 3 (top3), found in Dictyostelium discoideum (Social amoeba).